The following is a 273-amino-acid chain: Protein B4 (273 aa).

Residues 1–24 (MAPKKAVAAPEGGNKENAAVKGSS) form a disordered region. Residues 40–118 (SHPPTLSMVV…GATGRFKLAK (79 aa)) form the H15 domain. The disordered stretch occupies residues 120 to 273 (VKTTKAGKEN…AGKKGKKVTN (154 aa)). Over residues 154-256 (AKTEKEPKGE…KDVKAQKDST (103 aa)) the composition is skewed to basic and acidic residues. 3 tandem repeats follow at residues 189-198 (KEAKEVDKAN), 199-208 (KEAKEVDKAN), and 209-217 (KEAKEVDKA). The segment at 189–217 (KEAKEVDKANKEAKEVDKANKEAKEVDKA) is 3 X 10 AA tandem repeats. Residues 264-273 (AGKKGKKVTN) are compositionally biased toward basic residues.

This sequence belongs to the histone H1/H5 family. Interacts with nap1l1.

It localises to the nucleus. The protein resides in the chromosome. This chain is Protein B4 (b4), found in Xenopus laevis (African clawed frog).